The primary structure comprises 195 residues: Holliday junction branch migration complex subunit RuvA (195 aa).

Positions 1–61 (MYEYLDGVVV…ENDQTLYGFK (61 aa)) are domain I. A domain II region spans residues 62 to 139 (KAEDKELFLN…AVENEVGTLF (78 aa)). Residues 139–143 (FDLST) form a flexible linker region. Residues 144–195 (TSNQALDEALEALIALGYSEKEVKKLTKKLSEQTDRTTDQYISSGLKLLMKG) are domain III.

The protein belongs to the RuvA family. Homotetramer. Forms an RuvA(8)-RuvB(12)-Holliday junction (HJ) complex. HJ DNA is sandwiched between 2 RuvA tetramers; dsDNA enters through RuvA and exits via RuvB. An RuvB hexamer assembles on each DNA strand where it exits the tetramer. Each RuvB hexamer is contacted by two RuvA subunits (via domain III) on 2 adjacent RuvB subunits; this complex drives branch migration. In the full resolvosome a probable DNA-RuvA(4)-RuvB(12)-RuvC(2) complex forms which resolves the HJ.

The protein localises to the cytoplasm. Its function is as follows. The RuvA-RuvB-RuvC complex processes Holliday junction (HJ) DNA during genetic recombination and DNA repair, while the RuvA-RuvB complex plays an important role in the rescue of blocked DNA replication forks via replication fork reversal (RFR). RuvA specifically binds to HJ cruciform DNA, conferring on it an open structure. The RuvB hexamer acts as an ATP-dependent pump, pulling dsDNA into and through the RuvAB complex. HJ branch migration allows RuvC to scan DNA until it finds its consensus sequence, where it cleaves and resolves the cruciform DNA. In Pediococcus pentosaceus (strain ATCC 25745 / CCUG 21536 / LMG 10740 / 183-1w), this protein is Holliday junction branch migration complex subunit RuvA.